Consider the following 673-residue polypeptide: Poly(glycerol-phosphate) alpha-glucosyltransferase (673 aa).

Ser-2 is subject to Phosphoserine.

This sequence belongs to the glycosyltransferase group 1 family. Glycosyltransferase 4 subfamily.

It is found in the cytoplasm. It carries out the reaction 4-O-{[(2R)-1-glycerylphospho](n)-(2R)-1-glycerylphospho}-N-acetyl-beta-D-mannosaminyl-(1-&gt;4)-N-acetyl-alpha-D-glucosaminyl undecaprenyl diphosphate + n UDP-alpha-D-glucose = 4-O-{[(2R)-2-alpha-D-glucosyl-1-glycerylphospho](n)-(2R)-1-glycerylphospho}-N-acetyl-beta-D-mannosaminyl-(1-&gt;4)-N-acetyl-alpha-D-glucosaminyl undecaprenyl diphosphate + n UDP + n H(+). The protein operates within cell wall biogenesis; poly(glycerol phosphate) teichoic acid biosynthesis. In terms of biological role, catalyzes the addition of glucose to the C-2 hydroxy group of the glycerol units in teichoic acid. This is Poly(glycerol-phosphate) alpha-glucosyltransferase (tagE) from Bacillus subtilis (strain 168).